The chain runs to 201 residues: NADH-quinone oxidoreductase subunit C (201 aa).

Belongs to the complex I 30 kDa subunit family. NDH-1 is composed of 14 different subunits. Subunits NuoB, C, D, E, F, and G constitute the peripheral sector of the complex.

The protein localises to the cell inner membrane. It catalyses the reaction a quinone + NADH + 5 H(+)(in) = a quinol + NAD(+) + 4 H(+)(out). In terms of biological role, NDH-1 shuttles electrons from NADH, via FMN and iron-sulfur (Fe-S) centers, to quinones in the respiratory chain. The immediate electron acceptor for the enzyme in this species is believed to be ubiquinone. Couples the redox reaction to proton translocation (for every two electrons transferred, four hydrogen ions are translocated across the cytoplasmic membrane), and thus conserves the redox energy in a proton gradient. The chain is NADH-quinone oxidoreductase subunit C from Sinorhizobium medicae (strain WSM419) (Ensifer medicae).